A 23-amino-acid chain; its full sequence is IIGDTINGAITTADNIVGRIGII.

Expressed in skin granular glands.

It localises to the secreted. May act as an antimicrobial peptide. The chain is Septenin 2c from Osteopilus septentrionalis (Cuban treefrog).